Here is a 1153-residue protein sequence, read N- to C-terminus: PPi-type phosphoenolpyruvate carboxykinase 2 (1153 aa).

Residues 1085-1131 adopt a coiled-coil conformation; the sequence is RQKLEVAKLNKDLAYLNKTIAEKPRLVETLNKQIAAVKEELQYVSSE.

This sequence belongs to the PPi-type phosphoenolpyruvate carboxykinase family. In terms of assembly, monomer and trimer; forms heterotrimers with PEPCK1 and PEPCK3.

The protein localises to the cytoplasm. It is found in the cytosol. The enzyme catalyses oxaloacetate + diphosphate = phosphoenolpyruvate + phosphate + CO2. Functionally, inorganic pyrophosphate (PPi)-dependent phosphoenolpyruvate carboxykinase, which regulates the carbon flow of the central metabolism by fixing CO(2) to phosphoenolpyruvate to produce oxaloacetate. Can also produce pyruvate and diphosphate from phosphoenolpyruvate and phosphate. The protein is PPi-type phosphoenolpyruvate carboxykinase 2 of Entamoeba histolytica (strain ATCC 30459 / HM-1:IMSS / ABRM).